We begin with the raw amino-acid sequence, 357 residues long: tRNA pseudouridine synthase Pus10 (357 aa).

The THUMP domain maps to 1–118 (MNLCRECYGI…TFTFELQIRP (118 aa)). D187 functions as the Nucleophile in the catalytic mechanism. Positions 251 and 322 each coordinate substrate.

Belongs to the pseudouridine synthase Pus10 family.

The enzyme catalyses uridine(54) in tRNA = pseudouridine(54) in tRNA. The catalysed reaction is uridine(55) in tRNA = pseudouridine(55) in tRNA. Its function is as follows. Responsible for synthesis of pseudouridine from uracil-54 and uracil-55 in the psi GC loop of transfer RNAs. The protein is tRNA pseudouridine synthase Pus10 of Archaeoglobus fulgidus (strain ATCC 49558 / DSM 4304 / JCM 9628 / NBRC 100126 / VC-16).